A 374-amino-acid chain; its full sequence is Probable phosphoserine aminotransferase (374 aa).

An L-glutamate-binding site is contributed by Arg48. Residues 82–83 (AS), Trp110, Thr160, Asp183, and Gln206 contribute to the pyridoxal 5'-phosphate site. Lys207 bears the N6-(pyridoxal phosphate)lysine mark. 248-249 (NT) is a pyridoxal 5'-phosphate binding site.

It belongs to the class-V pyridoxal-phosphate-dependent aminotransferase family. SerC subfamily. As to quaternary structure, homodimer. Requires pyridoxal 5'-phosphate as cofactor.

The enzyme catalyses O-phospho-L-serine + 2-oxoglutarate = 3-phosphooxypyruvate + L-glutamate. It catalyses the reaction 4-(phosphooxy)-L-threonine + 2-oxoglutarate = (R)-3-hydroxy-2-oxo-4-phosphooxybutanoate + L-glutamate. Its pathway is amino-acid biosynthesis; L-serine biosynthesis; L-serine from 3-phospho-D-glycerate: step 2/3. The protein operates within cofactor biosynthesis; pyridoxine 5'-phosphate biosynthesis; pyridoxine 5'-phosphate from D-erythrose 4-phosphate: step 3/5. Functionally, catalyzes the reversible conversion of 3-phosphohydroxypyruvate to phosphoserine and of 3-hydroxy-2-oxo-4-phosphonooxybutanoate to phosphohydroxythreonine. This chain is Probable phosphoserine aminotransferase (serC), found in Dictyostelium discoideum (Social amoeba).